The following is a 91-amino-acid chain: uncharacterized protein (91 aa).

The chain crosses the membrane as a helical span at residues 12-34; sequence FAIVYANITFLFYYLLDFTLPFH.

The protein resides in the membrane. This is an uncharacterized protein from Saccharomyces cerevisiae (strain ATCC 204508 / S288c) (Baker's yeast).